Reading from the N-terminus, the 295-residue chain is Probable endonuclease 4 (295 aa).

Zn(2+)-binding residues include His78, His118, Glu154, Asp188, His191, His225, Asp238, His240, and Glu270.

Belongs to the AP endonuclease 2 family. Requires Zn(2+) as cofactor.

It catalyses the reaction Endonucleolytic cleavage to 5'-phosphooligonucleotide end-products.. Endonuclease IV plays a role in DNA repair. It cleaves phosphodiester bonds at apurinic or apyrimidinic (AP) sites, generating a 3'-hydroxyl group and a 5'-terminal sugar phosphate. This chain is Probable endonuclease 4, found in Vibrio campbellii (strain ATCC BAA-1116).